The following is a 271-amino-acid chain: S-adenosylmethionine decarboxylase proenzyme (271 aa).

Residue Ser-121 is the Schiff-base intermediate with substrate; via pyruvic acid of the active site. Ser-121 is modified (pyruvic acid (Ser); by autocatalysis). The Proton acceptor; for processing activity role is filled by His-126. The Proton donor; for catalytic activity role is filled by Cys-149.

Belongs to the prokaryotic AdoMetDC family. Type 2 subfamily. Heterooctamer of four alpha and four beta chains arranged as a tetramer of alpha/beta heterodimers. Pyruvate is required as a cofactor. Is synthesized initially as an inactive proenzyme. Formation of the active enzyme involves a self-maturation process in which the active site pyruvoyl group is generated from an internal serine residue via an autocatalytic post-translational modification. Two non-identical subunits are generated from the proenzyme in this reaction, and the pyruvate is formed at the N-terminus of the alpha chain, which is derived from the carboxyl end of the proenzyme. The post-translation cleavage follows an unusual pathway, termed non-hydrolytic serinolysis, in which the side chain hydroxyl group of the serine supplies its oxygen atom to form the C-terminus of the beta chain, while the remainder of the serine residue undergoes an oxidative deamination to produce ammonia and the pyruvoyl group blocking the N-terminus of the alpha chain.

It carries out the reaction S-adenosyl-L-methionine + H(+) = S-adenosyl 3-(methylsulfanyl)propylamine + CO2. Its pathway is amine and polyamine biosynthesis; S-adenosylmethioninamine biosynthesis; S-adenosylmethioninamine from S-adenosyl-L-methionine: step 1/1. Catalyzes the decarboxylation of S-adenosylmethionine to S-adenosylmethioninamine (dcAdoMet), the propylamine donor required for the synthesis of the polyamines spermine and spermidine from the diamine putrescine. The chain is S-adenosylmethionine decarboxylase proenzyme from Clostridium perfringens (strain ATCC 13124 / DSM 756 / JCM 1290 / NCIMB 6125 / NCTC 8237 / Type A).